The sequence spans 429 residues: D-galactonate dehydratase family member Caci_4410 (429 aa).

The segment at 1 to 22 (MTDANHLLDPSGALPQTRPPWT) is disordered. Asp-233 provides a ligand contact to Mg(2+). D-arabinonate is bound at residue His-235. Residues Glu-259 and Glu-285 each contribute to the Mg(2+) site. 4 residues coordinate D-arabinonate: Glu-285, Arg-306, His-335, and Glu-362.

It belongs to the mandelate racemase/muconate lactonizing enzyme family. GalD subfamily.

Has no detectable activity with D-mannonate and with a panel of 70 other acid sugars (in vitro), in spite of the conservation of the residues that are expected to be important for catalytic activity and cofactor binding. May have evolved a divergent function. This Catenulispora acidiphila (strain DSM 44928 / JCM 14897 / NBRC 102108 / NRRL B-24433 / ID139908) protein is D-galactonate dehydratase family member Caci_4410.